The primary structure comprises 3412 residues: Genome polyprotein (3412 aa).

Residues 1-104 lie on the Cytoplasmic side of the membrane; it reads MSGRKAQGKT…LSSRKRRSNE (104 aa). Residues 38–72 are hydrophobic; homodimerization of capsid protein C; that stretch reads PGPSRGVQGFIFFFLFNILTGKKLTAHLKKLWRML. Positions 102–121 are cleaved as a propeptide — ER anchor for the capsid protein C, removed in mature form by serine protease NS3; that stretch reads SNEMALFPLLLLGLLALSGG. A helical membrane pass occupies residues 105–125; sequence MALFPLLLLGLLALSGGVTLV. Topologically, residues 126–244 are extracellular; the sequence is RKNRWLLLNV…GERQLQKIER (119 aa). Residues asparagine 134 and asparagine 150 are each glycosylated (N-linked (GlcNAc...) asparagine; by host). A helical membrane pass occupies residues 245–265; it reads WLVRNPFFAVTALAIAYLVGN. The Cytoplasmic segment spans residues 266–270; the sequence is NTTQR. Residues 271-285 form a helical membrane-spanning segment; sequence VVIALLVLAVGPAYS. At 286 to 730 the chain is on the extracellular side; sequence AHCIGITDRD…TVFGSAFQGL (445 aa). Intrachain disulfides connect cysteine 288-cysteine 315, cysteine 345-cysteine 401, cysteine 345-cysteine 406, cysteine 359-cysteine 390, cysteine 377-cysteine 401, cysteine 377-cysteine 406, cysteine 467-cysteine 568, and cysteine 585-cysteine 615. The tract at residues 383-396 is fusion peptide; it reads DRGWGNGCGLFGKG. A helical transmembrane segment spans residues 731-751; that stretch reads FGGLSWITKVIMGAVLIWVGI. Residues 752-757 are Extracellular-facing; sequence NTRNMT. Residues 758-778 traverse the membrane as a helical segment; sequence MSMSMILVGVIMMFLSLGVGA. The Extracellular segment spans residues 779-1132; sequence DQGCAVNFGK…LVRSWVTAGE (354 aa). Cystine bridges form between cysteine 782–cysteine 793, cysteine 833–cysteine 921, cysteine 957–cysteine 1002, cysteine 1058–cysteine 1107, cysteine 1069–cysteine 1091, and cysteine 1090–cysteine 1094. N-linked (GlcNAc...) asparagine; by host glycosylation is found at asparagine 908 and asparagine 986. A helical transmembrane segment spans residues 1133-1153; the sequence is VHAVPFGLVSMMIAMEVVLRR. Residues 1154 to 1201 are Cytoplasmic-facing; sequence RQGPKQMLVGGVVLLGAMLVGQVTVLDLVKFVVAVGLHFHEINNGGDA. A helical transmembrane segment spans residues 1202–1222; it reads MYMALIASFSIRPGLLMGFGL. Residues 1223–1287 are Lumenal-facing; sequence RTLWSPRERL…ILPLMALMTP (65 aa). A helical transmembrane segment spans residues 1288–1308; that stretch reads MTMHEVRMATMLFCTVVIIGV. At 1309–1355 the chain is on the cytoplasmic side; that stretch reads LHQNSKDTSMQKTIPIVALTLTSYMGLTQPFLGLCAYMSTQVFGRRS. A helical membrane pass occupies residues 1356-1376; sequence IPVNEALAAAGLVGVLAGLAF. The Lumenal segment spans residues 1377 to 1378; the sequence is QD. A helical transmembrane segment spans residues 1379-1399; that stretch reads MENFLGPIAVGGILMMLVSVA. At 1400–1456 the chain is on the cytoplasmic side; sequence GRVDGLELKKLGEISWEEEAEISGSSSRYDVALSEQGEFKLLSEDKVPWDQIVMTSL. The interval 1407–1446 is interacts with and activates NS3 protease; that stretch reads LKKLGEISWEEEAEISGSSSRYDVALSEQGEFKLLSEDKV. An intramembrane region (helical) is located at residues 1457 to 1477; that stretch reads ALVGAAIHPFALLLVLGGWIL. Residues 1478-2157 are Cytoplasmic-facing; the sequence is HIKGARRSGD…RNALSMMPEA (680 aa). A Peptidase S7 domain is found at 1485-1665; the sequence is SGDVLWDIPT…ELKEESKEEL (181 aa). Catalysis depends on charge relay system; for serine protease NS3 activity residues histidine 1537, aspartate 1561, and serine 1622. The 157-residue stretch at 1669–1825 folds into the Helicase ATP-binding domain; that stretch reads PTMLKKGMTT…HSNGEIEDVQ (157 aa). Positions 1673-1676 are important for RNA-binding; sequence KKGM. An ATP-binding site is contributed by 1682–1689; that stretch reads FHPGAGKT. The DEAH box signature appears at 1773–1776; that stretch reads DEAH. The Helicase C-terminal domain occupies 1836 to 1997; that stretch reads GHEWILADKR…VRGGMVAPLY (162 aa). At lysine 1877 the chain carries N6-acetyllysine; by host. The disordered stretch occupies residues 1942–1963; it reads AAQRRGRIGRNPNRDGDSYYYS. A helical transmembrane segment spans residues 2158–2178; that stretch reads MTIVMLFLLAGLLTSGAVIFF. Topologically, residues 2179 to 2186 are lumenal; it reads MSPKGMSR. An intramembrane region (helical) is located at residues 2187-2207; the sequence is MSMAMGTMAGSGYLMFLGGVK. At 2208–2209 the chain is on the lumenal side; that stretch reads PT. Residues 2210–2230 traverse the membrane as a helical segment; the sequence is HISYVMLIFFVLMVVVIPEPG. Residues 2231 to 2241 are Cytoplasmic-facing; that stretch reads QQRTIQDNQVA. Residues 2242–2262 form a helical membrane-spanning segment; that stretch reads YLIIGILTLLSVVAANELGML. Residues 2263-2293 lie on the Lumenal side of the membrane; sequence EKTKEDFFGKRDITTPSGAIPWSWPDLDLKP. The helical intramembrane region spans 2294–2314; that stretch reads GAAWTVYVGIVTMLSPMLHHW. The Lumenal segment spans residues 2315 to 2360; the sequence is IKVEYGNLSLSGIAQSASVLSFMDKGIPFMKMNISVVILLVSGWNS. A helical transmembrane segment spans residues 2361–2380; sequence ITVIPLLCGIGGAMLHWTLI. The Cytoplasmic segment spans residues 2381–2421; that stretch reads LPGIKAQQSKLAQKRVFHGVAKNPVVDGNPTADIEEAPEMP. Residues 2422-2442 form a helical membrane-spanning segment; that stretch reads ALYEKKLALYLLLALSLMSVA. Residues 2443–2445 are Lumenal-facing; the sequence is MCR. Residues 2446–2466 traverse the membrane as a helical segment; that stretch reads TPFSLAEGIVLSSAALGPLIE. The Cytoplasmic portion of the chain corresponds to 2467-3411; the sequence is GNTSLLWNGP…VDADLQPGEL (945 aa). The mRNA cap 0-1 NS5-type MT domain occupies 2508-2772; that stretch reads GSASGKTLGE…DVILPIGTRS (265 aa). Serine 2563 contributes to the S-adenosyl-L-methionine binding site. Serine 2563 is modified (phosphoserine). The For 2'-O-MTase activity role is filled by lysine 2568. S-adenosyl-L-methionine is bound by residues glycine 2593, tryptophan 2594, threonine 2611, leucine 2612, aspartate 2638, and valine 2639. The active-site For 2'-O-MTase activity is the aspartate 2653. Isoleucine 2654 contacts S-adenosyl-L-methionine. Active-site for 2'-O-MTase activity residues include lysine 2689 and glutamate 2725. Tyrosine 2727 is an S-adenosyl-L-methionine binding site. The Nuclear localization signal signature appears at 2879-2912; the sequence is RKIMKVVNRWLFRHLSREKNPRLCTKEEFIAKVR. Residues glutamate 2946, histidine 2950, cysteine 2955, and cysteine 2958 each contribute to the Zn(2+) site. Residues 3036–3188 form the RdRp catalytic domain; sequence GGFYADDTAG…RPVDDRFGLA (153 aa). Residues histidine 3223, cysteine 3239, and cysteine 3358 each coordinate Zn(2+).

In the N-terminal section; belongs to the class I-like SAM-binding methyltransferase superfamily. mRNA cap 0-1 NS5-type methyltransferase family. As to quaternary structure, homodimer. Interacts (via N-terminus) with host EXOC1 (via C-terminus); this interaction results in EXOC1 degradation through the proteasome degradation pathway. Forms heterodimers with envelope protein E in the endoplasmic reticulum and Golgi. In terms of assembly, homodimer; in the endoplasmic reticulum and Golgi. Interacts with protein prM. Interacts with non-structural protein 1. As to quaternary structure, homodimer; Homohexamer when secreted. Interacts with envelope protein E. Interacts (via N-terminus) with serine protease NS3. In terms of assembly, forms a heterodimer with serine protease NS3. May form homooligomers. As to quaternary structure, forms a heterodimer with NS2B. Interacts with non-structural protein 2A (via N-terminus). Interacts with NS4B. Interacts with unphosphorylated RNA-directed RNA polymerase NS5; this interaction stimulates RNA-directed RNA polymerase NS5 guanylyltransferase activity. NS3 interacts with host PDCD6IP; this interaction contributes to virion release. Interacts with serine protease NS3. In terms of assembly, homodimer. Interacts with host STAT2; this interaction prevents the establishment of cellular antiviral state. Interacts with serine protease NS3. Interacts with host TRIM23; this interaction leads to NS5 ubiquitination. In terms of processing, specific enzymatic cleavages in vivo yield mature proteins. The nascent capsid protein C contains a C-terminal hydrophobic domain that act as a signal sequence for translocation of prM into the lumen of the ER. Mature capsid protein C is cleaved at a site upstream of this hydrophobic domain by NS3. prM is cleaved in post-Golgi vesicles by a host furin, releasing the mature small envelope protein M, and peptide pr. Non-structural protein 2A-alpha, a C-terminally truncated form of non-structural protein 2A, results from partial cleavage by NS3. Specific enzymatic cleavages in vivo yield mature proteins peptide 2K acts as a signal sequence and is removed from the N-terminus of NS4B by the host signal peptidase in the ER lumen. Signal cleavage at the 2K-4B site requires a prior NS3 protease-mediated cleavage at the 4A-2K site. Cleaved in post-Golgi vesicles by a host furin, releasing the mature small envelope protein M, and peptide pr. This cleavage is incomplete as up to 30% of viral particles still carry uncleaved prM. Post-translationally, N-glycosylated. In terms of processing, N-glycosylated. The excreted form is glycosylated and this is required for efficient secretion of the protein from infected cells. Polyubiquitinated; ubiquitination is probably mediated by host TRIM23 and is prerequisite for NS5-STAT2 interaction. NS5 is not ISGylated or sumoylated. Post-translationally, acetylated by host KAT5. Acetylation modulates NS3 RNA-binding and unwinding activities and plays an important positive role for viral replication. In terms of processing, phosphorylated on serines residues. This phosphorylation may trigger NS5 nuclear localization.

Its subcellular location is the virion. The protein resides in the host nucleus. It localises to the host cytoplasm. The protein localises to the host perinuclear region. It is found in the secreted. Its subcellular location is the virion membrane. The protein resides in the host endoplasmic reticulum membrane. It carries out the reaction Selective hydrolysis of -Xaa-Xaa-|-Yaa- bonds in which each of the Xaa can be either Arg or Lys and Yaa can be either Ser or Ala.. The enzyme catalyses RNA(n) + a ribonucleoside 5'-triphosphate = RNA(n+1) + diphosphate. The catalysed reaction is a ribonucleoside 5'-triphosphate + H2O = a ribonucleoside 5'-diphosphate + phosphate + H(+). It catalyses the reaction ATP + H2O = ADP + phosphate + H(+). It carries out the reaction a 5'-end (5'-triphosphoguanosine)-ribonucleoside in mRNA + S-adenosyl-L-methionine = a 5'-end (N(7)-methyl 5'-triphosphoguanosine)-ribonucleoside in mRNA + S-adenosyl-L-homocysteine. The enzyme catalyses a 5'-end (N(7)-methyl 5'-triphosphoguanosine)-ribonucleoside in mRNA + S-adenosyl-L-methionine = a 5'-end (N(7)-methyl 5'-triphosphoguanosine)-(2'-O-methyl-ribonucleoside) in mRNA + S-adenosyl-L-homocysteine + H(+). Its function is as follows. Plays a role in virus budding by binding to the cell membrane and gathering the viral RNA into a nucleocapsid that forms the core of a mature virus particle. During virus entry, may induce genome penetration into the host cytoplasm after hemifusion induced by the surface proteins. Can migrate to the cell nucleus where it modulates host functions. Functionally, inhibits RNA silencing by interfering with host Dicer. In terms of biological role, prevents premature fusion activity of envelope proteins in trans-Golgi by binding to envelope protein E at pH6.0. After virion release in extracellular space, gets dissociated from E dimers. Acts as a chaperone for envelope protein E during intracellular virion assembly by masking and inactivating envelope protein E fusion peptide. prM is the only viral peptide matured by host furin in the trans-Golgi network probably to avoid catastrophic activation of the viral fusion activity in acidic Golgi compartment prior to virion release. prM-E cleavage is inefficient, and many virions are only partially matured. These uncleaved prM would play a role in immune evasion. Its function is as follows. May play a role in virus budding. Exerts cytotoxic effects by activating a mitochondrial apoptotic pathway through M ectodomain. May display a viroporin activity. Functionally, binds to host cell surface receptor and mediates fusion between viral and cellular membranes. Envelope protein is synthesized in the endoplasmic reticulum in the form of heterodimer with protein prM. They play a role in virion budding in the ER, and the newly formed immature particle is covered with 60 spikes composed of heterodimer between precursor prM and envelope protein E. The virion is transported to the Golgi apparatus where the low pH causes dissociation of PrM-E heterodimers and formation of E homodimers. prM-E cleavage is inefficient, and many virions are only partially matured. These uncleaved prM would play a role in immune evasion. In terms of biological role, involved in immune evasion, pathogenesis and viral replication. Once cleaved off the polyprotein, is targeted to three destinations: the viral replication cycle, the plasma membrane and the extracellular compartment. Essential for viral replication. Required for formation of the replication complex and recruitment of other non-structural proteins to the ER-derived membrane structures. Excreted as a hexameric lipoparticle that plays a role against host immune response. Antagonizing the complement function. Binds to the host macrophages and dendritic cells. Inhibits signal transduction originating from Toll-like receptor 3 (TLR3). Component of the viral RNA replication complex that functions in virion assembly and antagonizes the host immune response. Its function is as follows. Required cofactor for the serine protease function of NS3. May have membrane-destabilizing activity and form viroporins. Functionally, displays three enzymatic activities: serine protease, NTPase and RNA helicase. NS3 serine protease, in association with NS2B, performs its autocleavage and cleaves the polyprotein at dibasic sites in the cytoplasm: C-prM, NS2A-NS2B, NS2B-NS3, NS3-NS4A, NS4A-2K and NS4B-NS5. NS3 RNA helicase binds RNA and unwinds dsRNA in the 3' to 5' direction. Also plays a role in virus assembly. In terms of biological role, regulates the ATPase activity of the NS3 helicase activity. NS4A allows NS3 helicase to conserve energy during unwinding. Functions as a signal peptide for NS4B and is required for the interferon antagonism activity of the latter. Its function is as follows. Induces the formation of ER-derived membrane vesicles where the viral replication takes place. Inhibits interferon (IFN)-induced host STAT1 phosphorylation and nuclear translocation, thereby preventing the establishment of cellular antiviral state by blocking the IFN-alpha/beta pathway. Functionally, replicates the viral (+) and (-) RNA genome, and performs the capping of genomes in the cytoplasm. NS5 methylates viral RNA cap at guanine N-7 and ribose 2'-O positions. Besides its role in RNA genome replication, also prevents the establishment of cellular antiviral state by blocking the interferon-alpha/beta (IFN-alpha/beta) signaling pathway. IFN-I induces binding of NS5 to host IFN-activated transcription factor STAT2, preventing its transcriptional activity. Host TRIM23 is the E3 ligase that interacts with and polyubiquitinates NS5 to promote its binding to STAT2 and trigger IFN-I signaling inhibition. The protein is Genome polyprotein of Aedes aegypti (Yellowfever mosquito).